Consider the following 654-residue polypeptide: Arrestin domain-containing protein C (654 aa).

Residues 1-105 (MTQRSLKINI…AKRNLMDQWL (105 aa)) form the C2 domain. Positions 616–647 (AKRIFLKIQQIQSERQKQQEQQEQQVVSNLEA) form a coiled coil.

The protein belongs to the arrestin family.

The chain is Arrestin domain-containing protein C (adcC) from Dictyostelium discoideum (Social amoeba).